The chain runs to 236 residues: Uridylate kinase (236 aa).

12-15 (KISG) provides a ligand contact to ATP. The interval 20–25 (GTNGYG) is involved in allosteric activation by GTP. Position 54 (Gly-54) interacts with UMP. Residues Gly-55 and Arg-59 each coordinate ATP. Residues Asp-72 and 133-140 (TGNPYFST) each bind UMP. Positions 166 and 169 each coordinate ATP.

Belongs to the UMP kinase family. As to quaternary structure, homohexamer.

It is found in the cytoplasm. The enzyme catalyses UMP + ATP = UDP + ADP. Its pathway is pyrimidine metabolism; CTP biosynthesis via de novo pathway; UDP from UMP (UMPK route): step 1/1. Its activity is regulated as follows. Allosterically activated by GTP. Inhibited by UTP. Functionally, catalyzes the reversible phosphorylation of UMP to UDP. This Clostridium acetobutylicum (strain ATCC 824 / DSM 792 / JCM 1419 / IAM 19013 / LMG 5710 / NBRC 13948 / NRRL B-527 / VKM B-1787 / 2291 / W) protein is Uridylate kinase.